Consider the following 1029-residue polypeptide: Carbamoyl phosphate synthase large chain (1029 aa).

A carboxyphosphate synthetic domain region spans residues 1 to 402 (MPKRTDLQTI…SLQKALRSTE (402 aa)). ATP contacts are provided by R129, R169, G175, G176, E208, I210, E215, G241, V242, H243, Q285, and E299. One can recognise an ATP-grasp 1 domain in the interval 133–328 (QAAMKKIGVE…IAKIAALLAV (196 aa)). Mg(2+)-binding residues include Q285, E299, and N301. The Mn(2+) site is built by Q285, E299, and N301. Residues 403 to 546 (SDVRGAFAEM…YSTYEWEDEV (144 aa)) form an oligomerization domain region. The interval 547–929 (TPTDKPKVVI…AYYRAELGAK (383 aa)) is carbamoyl phosphate synthetic domain. The region spanning 671 to 863 (NALCERLGLP…LAKYAARIAV (193 aa)) is the ATP-grasp 2 domain. The ATP site is built by R707, Q747, L749, E754, G779, V780, H781, S782, Q822, and E834. The Mg(2+) site is built by Q822, E834, and N836. Positions 822, 834, and 836 each coordinate Mn(2+). In terms of domain architecture, MGS-like spans 930-1028 (SNLPLSGTAL…QAWQQREAAA (99 aa)). Positions 930 to 1029 (SNLPLSGTAL…AWQQREAAAS (100 aa)) are allosteric domain.

Belongs to the CarB family. In terms of assembly, composed of two chains; the small (or glutamine) chain promotes the hydrolysis of glutamine to ammonia, which is used by the large (or ammonia) chain to synthesize carbamoyl phosphate. Tetramer of heterodimers (alpha,beta)4. Requires Mg(2+) as cofactor. Mn(2+) is required as a cofactor.

It catalyses the reaction hydrogencarbonate + L-glutamine + 2 ATP + H2O = carbamoyl phosphate + L-glutamate + 2 ADP + phosphate + 2 H(+). The catalysed reaction is hydrogencarbonate + NH4(+) + 2 ATP = carbamoyl phosphate + 2 ADP + phosphate + 2 H(+). The protein operates within amino-acid biosynthesis; L-arginine biosynthesis; carbamoyl phosphate from bicarbonate: step 1/1. It participates in pyrimidine metabolism; UMP biosynthesis via de novo pathway; (S)-dihydroorotate from bicarbonate: step 1/3. Its function is as follows. Large subunit of the glutamine-dependent carbamoyl phosphate synthetase (CPSase). CPSase catalyzes the formation of carbamoyl phosphate from the ammonia moiety of glutamine, carbonate, and phosphate donated by ATP, constituting the first step of 2 biosynthetic pathways, one leading to arginine and/or urea and the other to pyrimidine nucleotides. The large subunit (synthetase) binds the substrates ammonia (free or transferred from glutamine from the small subunit), hydrogencarbonate and ATP and carries out an ATP-coupled ligase reaction, activating hydrogencarbonate by forming carboxy phosphate which reacts with ammonia to form carbamoyl phosphate. In Deinococcus geothermalis (strain DSM 11300 / CIP 105573 / AG-3a), this protein is Carbamoyl phosphate synthase large chain.